The chain runs to 144 residues: Large ribosomal subunit protein uL15 (144 aa).

The interval 1-58 (MKLNTLSPAAGAKHAAKRVGRGIGSGLGKTAGRGHKGQKSRSGGSIRPGFEGGQMPLK) is disordered. The segment covering 21–31 (RGIGSGLGKTA) has biased composition (gly residues).

This sequence belongs to the universal ribosomal protein uL15 family. As to quaternary structure, part of the 50S ribosomal subunit.

Functionally, binds to the 23S rRNA. The polypeptide is Large ribosomal subunit protein uL15 (Psychromonas ingrahamii (strain DSM 17664 / CCUG 51855 / 37)).